Reading from the N-terminus, the 172-residue chain is Ribosome maturation factor RimM (172 aa).

Residues 96-168 (DGEFYYHEII…RVQVELMEGL (73 aa)) form the PRC barrel domain.

This sequence belongs to the RimM family. In terms of assembly, binds ribosomal protein uS19.

It is found in the cytoplasm. An accessory protein needed during the final step in the assembly of 30S ribosomal subunit, possibly for assembly of the head region. Essential for efficient processing of 16S rRNA. May be needed both before and after RbfA during the maturation of 16S rRNA. It has affinity for free ribosomal 30S subunits but not for 70S ribosomes. The protein is Ribosome maturation factor RimM of Streptococcus agalactiae serotype III (strain NEM316).